We begin with the raw amino-acid sequence, 260 residues long: tRNA pseudouridine synthase A (260 aa).

The active-site Nucleophile is D51. Y109 is a binding site for substrate.

It belongs to the tRNA pseudouridine synthase TruA family. Homodimer.

It carries out the reaction uridine(38/39/40) in tRNA = pseudouridine(38/39/40) in tRNA. In terms of biological role, formation of pseudouridine at positions 38, 39 and 40 in the anticodon stem and loop of transfer RNAs. This is tRNA pseudouridine synthase A from Albidiferax ferrireducens (strain ATCC BAA-621 / DSM 15236 / T118) (Rhodoferax ferrireducens).